We begin with the raw amino-acid sequence, 1827 residues long: Phenolphthiocerol/phthiocerol polyketide synthase subunit C (1827 aa).

The 427-residue stretch at 35 to 461 (CEPVAVVGIG…GTNAHVVVEQ (427 aa)) folds into the Ketosynthase family 3 (KS3) domain. Residues cysteine 207, histidine 342, and histidine 383 each act as for beta-ketoacyl synthase activity in the active site. Positions 566 to 876 (VFVYSGQGSQ…LAAVGVAASE (311 aa)) are acyltransferase. Serine 654 serves as the catalytic For malonyltransferase activity. The interval 910 to 1037 (HPLLGAHIEM…AKVEQSPREC (128 aa)) is N-terminal hotdog fold. Positions 910–1076 (HPLLGAHIEM…QHHGPAFAAL (167 aa)) are dehydratase. Positions 910–1198 (HPLLGAHIEM…LRRVERRAVP (289 aa)) constitute a PKS/mFAS DH domain. Histidine 942 (proton acceptor; for dehydratase activity) is an active-site residue. The tract at residues 1050-1198 (GTTVSPADFY…LRRVERRAVP (149 aa)) is C-terminal hotdog fold. The active-site Proton donor; for dehydratase activity is aspartate 1111. The tract at residues 1439–1617 (ASYVVTGGLG…VINWGPWSEV (179 aa)) is beta-ketoacyl reductase. 1440-1485 (SYVVTGGLGGLGLVVARWLVDRGAGRVVLGGRSDPTDEQCNVLAEL) lines the NADP(+) pocket. In terms of domain architecture, Carrier spans 1706-1785 (RAVTERMCAR…DLTADLMRQL (80 aa)). Serine 1745 carries the O-(pantetheine 4'-phosphoryl)serine modification. Positions 1807–1820 (RAAARHGAAMRRRP) are enriched in basic residues. Positions 1807 to 1827 (RAAARHGAAMRRRPKPEVQGG) are disordered.

NADP(+) is required as a cofactor. The cofactor is pantetheine 4'-phosphate.

The enzyme catalyses icosanoyl-[(phenol)carboxyphthiodiolenone synthase] + 2 (S)-methylmalonyl-CoA + 3 malonyl-CoA + 5 NADPH + 10 H(+) = C32-carboxyphthiodiolenone-[(phenol)carboxyphthiodiolenone synthase] + 5 CO2 + 5 NADP(+) + 5 CoA + 2 H2O. It carries out the reaction docosanoyl-[(phenol)carboxyphthiodiolenone synthase] + 2 (S)-methylmalonyl-CoA + 3 malonyl-CoA + 5 NADPH + 10 H(+) = C34-carboxyphthiodiolenone-[(phenol)carboxyphthiodiolenone synthase] + 5 CO2 + 5 NADP(+) + 5 CoA + 2 H2O. It catalyses the reaction 17-(4-hydroxyphenyl)heptadecanoyl-[(phenol)carboxyphthiodiolenone synthase] + 2 (S)-methylmalonyl-CoA + 3 malonyl-CoA + 5 NADPH + 10 H(+) = C35-(phenol)carboxyphthiodiolenone-[(phenol)carboxyphthiodiolenone synthase] + 5 CO2 + 5 NADP(+) + 5 CoA + 2 H2O. The catalysed reaction is 19-(4-hydroxyphenyl)nonadecanoyl-[(phenol)carboxyphthiodiolenone synthase] + 2 (S)-methylmalonyl-CoA + 3 malonyl-CoA + 5 NADPH + 10 H(+) = C37-(phenol)carboxyphthiodiolenone-[(phenol)carboxyphthiodiolenone synthase] + 5 CO2 + 5 NADP(+) + 5 CoA + 2 H2O. It functions in the pathway lipid metabolism; fatty acid biosynthesis. In terms of biological role, part of the PpsABCDE complex involved in the biosynthesis of the lipid core common to phthiocerols and phenolphthiocerols by successive additions of malonyl-CoA or methylmalonyl-CoA extender units. PpsA can accept as substrate the activated forms of either icosanoyl (C20), docosanoyl (C22) or lignoceroyl (C24) groups from FadD26, or a (4-hydroxyphenyl)-C17 or (4-hydroxyphenyl)-C19 fatty acyl from FadD29. PpsA initiates the biosynthesis and extends its substrate using a malonyl-CoA extender unit. The PpsB and PpsC proteins add the second and third malonyl-CoA extender units. PpsD adds an (R)-methylmalonyl unit and PpsE adds a second (R)-methylmalonyl unit. The incorporation of the methylmalonyl units results in formation of two branched methyl groups in the elongated product. The sequence is that of Phenolphthiocerol/phthiocerol polyketide synthase subunit C (ppsD) from Mycobacterium tuberculosis (strain CDC 1551 / Oshkosh).